A 252-amino-acid chain; its full sequence is MAGHSKWANIQHRKGKQDKKRAVLFARLSKEITVASKMGGPDPAMNPRLRLAITNAKGVSVPKDNIQRAIDKGQSSGGADYADIRYEGVGPGGVGIIVEASTDNKNRAATDIRTAFSKNGGTLGTTGSVSFNFDQLGEIEYPVSAGSADEVMEAAIMAGAQDVESNEDGHWIYTAREDFAAVSTALADTFGSKVEPTSAKIIWKPKVTTPIAGDAADQLMKMLDVLDELDDVQSVYDNSEISEDEMARLSGG.

It belongs to the TACO1 family.

It localises to the cytoplasm. The sequence is that of Probable transcriptional regulatory protein HNE_0161 from Hyphomonas neptunium (strain ATCC 15444).